The following is a 365-amino-acid chain: uncharacterized protein (365 aa).

Belongs to the NAD(P)-dependent epimerase/dehydratase family.

It localises to the cytoplasm. The protein resides in the nucleus. This is an uncharacterized protein from Schizosaccharomyces pombe (strain 972 / ATCC 24843) (Fission yeast).